Here is a 424-residue protein sequence, read N- to C-terminus: Chitinase CLP (424 aa).

Residues 1–18 form the signal peptide; it reads MSLHLLLAVSLCVALASS. In terms of domain architecture, Peptidase A1 spans 43–405; it reads AATSLYTVPI…DEEKQRLGFS (363 aa). 3 N-linked (GlcNAc...) asparagine glycosylation sites follow: Asn139, Asn345, and Asn419.

Belongs to the peptidase A1 family. In terms of tissue distribution, expressed in roots. Expressed at low levels in leaf sheaths, stems and flowers.

It localises to the secreted. The protein resides in the extracellular space. It is found in the apoplast. The catalysed reaction is Random endo-hydrolysis of N-acetyl-beta-D-glucosaminide (1-&gt;4)-beta-linkages in chitin and chitodextrins.. Chitinase that possesses antifungal activity. Inhibits the growth of the fungal pathogen Rhizoctonia solani by degrading the fungal cell wall. Does not possess inhibiting activity against fungal endo-1,4-beta-D-xylanases belonging to glycoside hydrolase family 10 (GH10) and family 11 (GH11). Involved in the regulation of plant growth by regulating the intracellular calcium ion concentration in roots. This Oryza sativa subsp. japonica (Rice) protein is Chitinase CLP.